The sequence spans 913 residues: Valine--tRNA ligase (913 aa).

Positions 49–59 (PNVTGNLHLGH) match the 'HIGH' region motif. Residues 544-548 (KMSKS) carry the 'KMSKS' region motif. K547 serves as a coordination point for ATP. Positions 851 to 912 (DWVKKQQKRL…ERLEGVLAQL (62 aa)) form a coiled coil.

This sequence belongs to the class-I aminoacyl-tRNA synthetase family. ValS type 1 subfamily. In terms of assembly, monomer.

The protein localises to the cytoplasm. It carries out the reaction tRNA(Val) + L-valine + ATP = L-valyl-tRNA(Val) + AMP + diphosphate. Its function is as follows. Catalyzes the attachment of valine to tRNA(Val). As ValRS can inadvertently accommodate and process structurally similar amino acids such as threonine, to avoid such errors, it has a 'posttransfer' editing activity that hydrolyzes mischarged Thr-tRNA(Val) in a tRNA-dependent manner. This is Valine--tRNA ligase from Deinococcus radiodurans (strain ATCC 13939 / DSM 20539 / JCM 16871 / CCUG 27074 / LMG 4051 / NBRC 15346 / NCIMB 9279 / VKM B-1422 / R1).